We begin with the raw amino-acid sequence, 131 residues long: Small ribosomal subunit protein bS6 (131 aa).

The disordered stretch occupies residues 98-131 (EASPMVKAKDERRERRDDFANETADDADAGDSEE). Basic and acidic residues predominate over residues 104–116 (KAKDERRERRDDF). The segment covering 120 to 131 (TADDADAGDSEE) has biased composition (acidic residues).

It belongs to the bacterial ribosomal protein bS6 family.

Binds together with bS18 to 16S ribosomal RNA. The sequence is that of Small ribosomal subunit protein bS6 from Citrobacter koseri (strain ATCC BAA-895 / CDC 4225-83 / SGSC4696).